The chain runs to 1653 residues: MRPPATPPDPTKEPGCKGTTRGLRKRGLPLTPEPGEGGGCSLEARGCEEESRQKQRMVTQASGREETEGDKLAKENGKITEAPSDDPQPGTDLVRKTSITSSESLQTVECSEFQNMAFLQSLDKEELGEGIKRRMRIKKCKSLENPPLEITKNEATQNIKVEFQDELFKNTPKHSCNSLSPGVEKNCSFELHDYSFLHSEGCNNENNFEDKPHDVCLHTEENSLKLKKENLRNLAEKDDTRTTTKLLKTEKSVIASKLLLEESHLYQNKNNGLTSCLQSEKNKYSVEENNTGRKHRKKMKSGKEEKNINLTLSNVCNNSVLVLQENQMGMEGKEAETLEPKKSFLKALRKINHNTLPPVDHLCLPKTVGKTSSRHHINAMLQKTLESSLKEDIKNTSESLGCKRIEPEKYNKSMISSTVKSPSDGHHMEKRSPRGDLRSETEESKVSCCRTIPMTGKRVWPFYSCARISAQCWKKTSLSDLNYSLLGPLENVRQHDSIIHQMNQTHLPDSKLLQPSLTERTTESSRKEMYDSDLSCLSSVSSVESTVMDIKEAMSHDKKTKLEEPSRNGAEVVSNATEDTQLSNITQSLTGNKKRKGNLSKLNLTVASQESQETNNCANKTVHRKVCITKQTLVAPDLVKILNTGRLTNFKIPLLKNKTGKRGAVSARSSEREAYSPLELLDSLSGVEAKQNRNKENICTTSGPQSLNLHSCIAPGQASSHSFYNKNSCTSSSFTKKGYDNKACNHISEPGNIISNKESISMKIENNTFSCDLGYIDQSSFCSKKQEAFVPISSEISGRKMTKSISELKLGFPDILKAYEDDVLLIDVIQDDPELFGISSEGDLSFASEVSKISQEPRVSEDQPTADFKHMHLPGKKEPGDLSKEVALLDPGLLKLESCPSLSAAKEPQHDPEGAAISLEATEETVVSGSLEGLSEQARASDSDAKCISSDKATVMEEQESTHEIFKSKDSRNVESATECQLATLGPNPLCSSALPVNLSSHQDVVSTPWINDVRFPGRHSVLQLQNPETCEIFKREKNMGVFQKPLGLLIPHRYCKLHFNTLRGCERAQCKFVHVPEQGDEKICMDVFRKYISVNEQRLLHRAAYIFLEYYRKFPPGIHFSLQVLNDLLISLLKHCLLKEVFQVVQLSIMAKMLPALKILLKIFEYVAAMKLRNAVPALIEIFCKFIEAGMVPDPEHLNYIVKLLHQAQASQQEISAVLQAKSRLRVRQLKKNWKCDLDSALSEVETCKEKSDWTKLGNLYISIKMSCEEFADLQRFCACVAETLTEDYKEERPGVPFCEFAETVSKDPQYSEVDKTLLGRIGISAVYFYHRLLLWAKGRKVLDILYELKIHFTSLKGLTGPEKEAPRCQIVNVAAEIFIKSGSLDGAIWVLRESEWIINTPLWPCDRMDVLNRHNLLCTIAHEILGKNLYKQTFEVLRNLPSFQNSQEMMGVSQSSLLFNELLDACIESNSLGISSSVAEFMVAKSIPIDFSFLRRLITSLGRSCLWLKARAHYKSALSLGCYPPLEGNLHRKLLLVPSYLSEIEMLLAMEIFLVSNASGIQSAGMGAPTQVLQIVLKRCEESKSRSKDEYQAAVERLVMAARISDPKLFIKHMTVNINKEQVYSLEHCSALKWLKENMKWAGKVWLFTNH.

Disordered stretches follow at residues 1–94 (MRPP…TDLV), 284–303 (YSVE…KSGK), and 415–442 (ISST…SETE). The span at 63 to 78 (GREETEGDKLAKENGK) shows a compositional bias: basic and acidic residues. The span at 423 to 442 (SDGHHMEKRSPRGDLRSETE) shows a compositional bias: basic and acidic residues.

As to expression, restricted to testis, where it localizes to germ cells.

It localises to the cytoplasm. It is found in the cytosol. Functionally, important for normal spermatogenesis and male fertility. Specifically required for progression to the post-meiotic stages of spermatocyte development. Seems to be necessary for normal expression levels of a number of testis-expressed gene transcripts, although its role in this process is unclear. This is Protein TOPAZ1 from Mus musculus (Mouse).